A 308-amino-acid chain; its full sequence is Ribonuclease HIII (308 aa).

Residues 91-308 (KNVIGSDEVG…TEKALKMVKK (218 aa)) enclose the RNase H type-2 domain. A divalent metal cation contacts are provided by Asp97, Glu98, and Asp202.

It belongs to the RNase HII family. RnhC subfamily. The cofactor is Mn(2+). It depends on Mg(2+) as a cofactor.

Its subcellular location is the cytoplasm. The catalysed reaction is Endonucleolytic cleavage to 5'-phosphomonoester.. Its function is as follows. Endonuclease that specifically degrades the RNA of RNA-DNA hybrids. This is Ribonuclease HIII from Listeria monocytogenes serotype 4b (strain CLIP80459).